The primary structure comprises 394 residues: Guanine nucleotide-binding protein G(s) subunit alpha isoforms short (394 aa).

The disordered stretch occupies residues 1-23 (MGCLGNSKTEDQRNEEKAQREAN). The N-palmitoyl glycine moiety is linked to residue glycine 2. Cysteine 3 carries the S-palmitoyl cysteine lipid modification. The segment covering 8-23 (KTEDQRNEEKAQREAN) has biased composition (basic and acidic residues). The 356-residue stretch at 39-394 (ATHRLLLLGA…RMHLRQYELL (356 aa)) folds into the G-alpha domain. Residues 42-55 (RLLLLGAGESGKST) are G1 motif. 47–55 (GAGESGKST) contacts GTP. Serine 54 contacts Mg(2+). The tract at residues 68 to 91 (FNGEGGEEDPQAARSNSDGEKATK) is disordered. The G2 motif stretch occupies residues 196–204 (DLLRCRVLT). Residues 197-204 (LLRCRVLT), 223-227 (DVGGQ), and 292-295 (NKQD) each bind GTP. Threonine 204 contributes to the Mg(2+) binding site. The interval 219 to 228 (FHMFDVGGQR) is G3 motif. The tract at residues 288 to 295 (ILFLNKQD) is G4 motif. Lysine 300 participates in a covalent cross-link: Glycyl lysine isopeptide (Lys-Gly) (interchain with G-Cter in ubiquitin). Serine 352 is modified (phosphoserine). Residues 364-369 (TCAVDT) form a G5 motif region. A GTP-binding site is contributed by alanine 366.

This sequence belongs to the G-alpha family. G(s) subfamily. In terms of assembly, heterotrimeric G proteins are composed of 3 units; alpha, beta and gamma. The alpha chain contains the guanine nucleotide binding site. Component of the TAS2R14-GNAS2 complex, consisting of TAS2R14, GNAS2, GNB1 and GNG2; within the complex interacts with TAS2R14; this complex plays a role in the perception of bitterness. Interacts with CRY1; the interaction may block GPCR-mediated regulation of cAMP concentrations. Interacts with ADCY6 and stimulates its adenylyl cyclase activity. Interacts with ADCY2 and ADCY5. Stimulates the ADCY5 adenylyl cyclase activity. Interacts (GDP-bound form) with RIC8B; promoting GNAS folding and association with the plasma membrane. Interaction with SASH1. Interacts with GASL2L2.

The protein resides in the cell membrane. It carries out the reaction GTP + H2O = GDP + phosphate + H(+). In terms of biological role, guanine nucleotide-binding proteins (G proteins) function as transducers in numerous signaling pathways controlled by G protein-coupled receptors (GPCRs). The alpha chain contains the guanine nucleotide binding site and alternates between an active, GTP-bound state and an inactive, GDP-bound state. Signaling by an activated GPCR promotes GDP release and GTP binding. The alpha subunit has a low GTPase activity that converts bound GTP to GDP, thereby terminating the signal. Both GDP release and GTP hydrolysis are modulated by numerous regulatory proteins. Signaling involves the activation of adenylyl cyclases, resulting in increased levels of the signaling molecule cAMP. Functions downstream of beta-adrenergic receptors. Stimulates the Ras signaling pathway via RAPGEF2. The sequence is that of Guanine nucleotide-binding protein G(s) subunit alpha isoforms short (GNAS) from Bos taurus (Bovine).